Here is a 350-residue protein sequence, read N- to C-terminus: Protein RecA (350 aa).

66–73 (GPESSGKT) provides a ligand contact to ATP.

The protein belongs to the RecA family.

Its subcellular location is the cytoplasm. Can catalyze the hydrolysis of ATP in the presence of single-stranded DNA, the ATP-dependent uptake of single-stranded DNA by duplex DNA, and the ATP-dependent hybridization of homologous single-stranded DNAs. It interacts with LexA causing its activation and leading to its autocatalytic cleavage. The polypeptide is Protein RecA (Nocardioides sp. (strain ATCC BAA-499 / JS614)).